We begin with the raw amino-acid sequence, 354 residues long: MKKIIMTGGGTAGHVTPNLALVPELKKLGYEIKYIGSIEGIERKIIEKEGIEYFPISSGKLRRYFDLKNFSDPFKVLKGVFQAKKIIKREKPDIVFSKGGFVTVPVVIAAHLNKIPVIAHESDITPGLANKLATPYCTRVCVTFPESVKHIKGDKAVLTGTPIRRELLEGNKLEGIKLCGFKDNKPILLIIGGSLGSKIINEIVRKNLDNILSKFNIIHICGKSNLDENLENRKGYAQFEYVNEELPDLMKASDLVISRAGANVIYELLALKKPNLLIPLSKKSSRGDQILNAASFEKSGYSLVLKEEELEDKTLIKKLNYLYENRNVYINNMSKSKMDNGVKNITELIKKYTK.

Residues 11–13, arginine 164, serine 194, and glutamine 289 contribute to the UDP-N-acetyl-alpha-D-glucosamine site; that span reads TAG.

It belongs to the glycosyltransferase 28 family. MurG subfamily.

The protein resides in the cell membrane. The enzyme catalyses di-trans,octa-cis-undecaprenyl diphospho-N-acetyl-alpha-D-muramoyl-L-alanyl-D-glutamyl-meso-2,6-diaminopimeloyl-D-alanyl-D-alanine + UDP-N-acetyl-alpha-D-glucosamine = di-trans,octa-cis-undecaprenyl diphospho-[N-acetyl-alpha-D-glucosaminyl-(1-&gt;4)]-N-acetyl-alpha-D-muramoyl-L-alanyl-D-glutamyl-meso-2,6-diaminopimeloyl-D-alanyl-D-alanine + UDP + H(+). The protein operates within cell wall biogenesis; peptidoglycan biosynthesis. Functionally, cell wall formation. Catalyzes the transfer of a GlcNAc subunit on undecaprenyl-pyrophosphoryl-MurNAc-pentapeptide (lipid intermediate I) to form undecaprenyl-pyrophosphoryl-MurNAc-(pentapeptide)GlcNAc (lipid intermediate II). The chain is UDP-N-acetylglucosamine--N-acetylmuramyl-(pentapeptide) pyrophosphoryl-undecaprenol N-acetylglucosamine transferase from Clostridium botulinum (strain ATCC 19397 / Type A).